We begin with the raw amino-acid sequence, 257 residues long: DNA-binding and peroxide stress resistance protein YaaA (257 aa).

The Helix-hairpin-helix signature appears at 35–66 (IGIARKLSAPQIGKLMSISDKLADLNATRFHD).

It belongs to the UPF0246 family.

It localises to the cytoplasm. In terms of biological role, protects bacteria from neutrophil-related defense upon infection of mammals. Binds DNA. The polypeptide is DNA-binding and peroxide stress resistance protein YaaA (Klebsiella pneumoniae subsp. pneumoniae (strain HS11286)).